Reading from the N-terminus, the 295-residue chain is Small ribosomal subunit protein uS2 (295 aa).

This sequence belongs to the universal ribosomal protein uS2 family.

This chain is Small ribosomal subunit protein uS2, found in Rickettsia canadensis (strain McKiel).